The primary structure comprises 341 residues: Ribosomal RNA small subunit methyltransferase C (341 aa).

The protein belongs to the methyltransferase superfamily. RsmC family. In terms of assembly, monomer.

The protein localises to the cytoplasm. The enzyme catalyses guanosine(1207) in 16S rRNA + S-adenosyl-L-methionine = N(2)-methylguanosine(1207) in 16S rRNA + S-adenosyl-L-homocysteine + H(+). Specifically methylates the guanine in position 1207 of 16S rRNA in the 30S particle. The chain is Ribosomal RNA small subunit methyltransferase C from Shewanella pealeana (strain ATCC 700345 / ANG-SQ1).